The following is an 877-amino-acid chain: Putative ankyrin repeat protein R748 (877 aa).

ANK repeat units lie at residues 44–74, 79–109, 115–145, 202–231, 243–272, and 282–311; these read IRHI…TINV, QNNT…NINY, IGIS…AIQQ, MGYR…SINE, NNND…PIHM, and LVPT…SIQA. Residues 525 to 579 are disordered; it reads DSDEDPVCDSNESDNSNDINNHVKSDNKLNSSNDYYDEDDSEDNYNNQSDDEPLV. The span at 533 to 544 shows a compositional bias: low complexity; sequence DSNESDNSNDIN.

The sequence is that of Putative ankyrin repeat protein R748 from Acanthamoeba polyphaga mimivirus (APMV).